The following is a 72-amino-acid chain: MSKEDVIELEGTVIEALPNAMFQVQLDNGHKVLAHVSGKLRMNFIRILPGDRVVVQLSPYDLTRGRIVWRSK.

The 72-residue stretch at 1–72 (MSKEDVIELE…TRGRIVWRSK (72 aa)) folds into the S1-like domain.

It belongs to the IF-1 family. As to quaternary structure, component of the 30S ribosomal translation pre-initiation complex which assembles on the 30S ribosome in the order IF-2 and IF-3, IF-1 and N-formylmethionyl-tRNA(fMet); mRNA recruitment can occur at any time during PIC assembly.

The protein localises to the cytoplasm. In terms of biological role, one of the essential components for the initiation of protein synthesis. Stabilizes the binding of IF-2 and IF-3 on the 30S subunit to which N-formylmethionyl-tRNA(fMet) subsequently binds. Helps modulate mRNA selection, yielding the 30S pre-initiation complex (PIC). Upon addition of the 50S ribosomal subunit IF-1, IF-2 and IF-3 are released leaving the mature 70S translation initiation complex. This Caldicellulosiruptor saccharolyticus (strain ATCC 43494 / DSM 8903 / Tp8T 6331) protein is Translation initiation factor IF-1.